The primary structure comprises 153 residues: Actin-related protein 2/3 complex subunit 5-like protein (153 aa).

The residue at position 64 (Ser64) is a Phosphoserine.

The protein belongs to the ARPC5 family. May be a component of the Arp2/3 complex in which it may replace ARPC5.

Its subcellular location is the cytoplasm. It is found in the cytoskeleton. It localises to the cell projection. May function as component of the Arp2/3 complex which is involved in regulation of actin polymerization and together with an activating nucleation-promoting factor (NPF) mediates the formation of branched actin networks. The sequence is that of Actin-related protein 2/3 complex subunit 5-like protein (ARPC5L) from Bos taurus (Bovine).